Here is a 101-residue protein sequence, read N- to C-terminus: DNA-binding protein Fis (101 aa).

The H-T-H motif DNA-binding region spans Gln-77–Lys-96.

This sequence belongs to the transcriptional regulatory Fis family. Homodimer.

In terms of biological role, activates ribosomal RNA transcription. Plays a direct role in upstream activation of rRNA promoters. The sequence is that of DNA-binding protein Fis from Shewanella baltica (strain OS223).